A 333-amino-acid polypeptide reads, in one-letter code: Phosphate acyltransferase (333 aa).

Belongs to the PlsX family. In terms of assembly, homodimer. Probably interacts with PlsY.

It localises to the cytoplasm. It catalyses the reaction a fatty acyl-[ACP] + phosphate = an acyl phosphate + holo-[ACP]. The protein operates within lipid metabolism; phospholipid metabolism. Catalyzes the reversible formation of acyl-phosphate (acyl-PO(4)) from acyl-[acyl-carrier-protein] (acyl-ACP). This enzyme utilizes acyl-ACP as fatty acyl donor, but not acyl-CoA. This Pelagibacter ubique (strain HTCC1062) protein is Phosphate acyltransferase.